A 140-amino-acid polypeptide reads, in one-letter code: Phosphoribosyl-AMP cyclohydrolase (140 aa).

Asp85 is a binding site for Mg(2+). Residue Cys86 coordinates Zn(2+). 2 residues coordinate Mg(2+): Asp87 and Asp89. Cys102 and Cys109 together coordinate Zn(2+).

This sequence belongs to the PRA-CH family. As to quaternary structure, homodimer. The cofactor is Mg(2+). Zn(2+) is required as a cofactor.

It localises to the cytoplasm. The catalysed reaction is 1-(5-phospho-beta-D-ribosyl)-5'-AMP + H2O = 1-(5-phospho-beta-D-ribosyl)-5-[(5-phospho-beta-D-ribosylamino)methylideneamino]imidazole-4-carboxamide. It participates in amino-acid biosynthesis; L-histidine biosynthesis; L-histidine from 5-phospho-alpha-D-ribose 1-diphosphate: step 3/9. In terms of biological role, catalyzes the hydrolysis of the adenine ring of phosphoribosyl-AMP. This is Phosphoribosyl-AMP cyclohydrolase from Bradyrhizobium diazoefficiens (strain JCM 10833 / BCRC 13528 / IAM 13628 / NBRC 14792 / USDA 110).